The sequence spans 299 residues: MFNNNRIRIAMQKTGRLSSDSIKLLTSCGIKINLKQQKLIAFAENMPIDAMLVRDDDIPGLVMDGVVDLGIVGENVLEEERLNRISQNSEHSYVTLTRLDFGICRLSLAVPVNTTYTHINSLKNIRIATSYPHLLKKYLDKKNISFKSCMLNGSVEVAPRAGLADAICDLVSTGATLEANGLREVQVVYRSRACLISKNGDINTDKKEVINKLMTRIKGVIKARESKYIMLHAPINKLEEVISLLHGAERPTVLKLAGDDNRVAMHMVSSETLFWETMEKLKALGASSILVLPIEKMME.

It belongs to the ATP phosphoribosyltransferase family. Long subfamily. In terms of assembly, equilibrium between an active dimeric form, an inactive hexameric form and higher aggregates. Interconversion between the various forms is largely reversible and is influenced by the natural substrates and inhibitors of the enzyme. It depends on Mg(2+) as a cofactor.

Its subcellular location is the cytoplasm. The catalysed reaction is 1-(5-phospho-beta-D-ribosyl)-ATP + diphosphate = 5-phospho-alpha-D-ribose 1-diphosphate + ATP. It participates in amino-acid biosynthesis; L-histidine biosynthesis; L-histidine from 5-phospho-alpha-D-ribose 1-diphosphate: step 1/9. Its activity is regulated as follows. Feedback inhibited by histidine. Functionally, catalyzes the condensation of ATP and 5-phosphoribose 1-diphosphate to form N'-(5'-phosphoribosyl)-ATP (PR-ATP). Has a crucial role in the pathway because the rate of histidine biosynthesis seems to be controlled primarily by regulation of HisG enzymatic activity. This Buchnera aphidicola subsp. Diuraphis noxia protein is ATP phosphoribosyltransferase.